Consider the following 190-residue polypeptide: Putative manganese efflux pump MntP (190 aa).

6 consecutive transmembrane segments (helical) span residues 3–23 (FLQIFLLSIGVAADAFACSVV), 37–57 (LVLAGIFGVFQAAMPLIGWVI), 72–88 (HWIAFALLGVVGAKMIW), 111–131 (IILGLATSIDALAVGMGLAFV), 138–158 (VALSMGLITFALSLVGAWIGH), and 164–184 (FGKWATILGGIILIGIGANIV).

The protein belongs to the MntP (TC 9.B.29) family.

It localises to the cell membrane. In terms of biological role, probably functions as a manganese efflux pump. This is Putative manganese efflux pump MntP from Corynebacterium glutamicum (strain R).